The chain runs to 206 residues: MIVTIDGVAASGKSSVSSGVARALGIPYVSSGLLYRAATLLGLEAALDLSDAPRLLAHLRALPLRLEPLAEGNRVWSGERDLTPGLHQSAVDAGVSTVAAHPELRAWVDEQLRQLPPPFVAEGRDMGTNVFPDAPAKFYLTASPRIRAERRSAERPEDVDAIEAALIARDRKDAAQSAPAPDARVIDTGPLGLEEVIGEILGEIGQ.

Residue 7-15 (GVAASGKSS) participates in ATP binding.

This sequence belongs to the cytidylate kinase family. Type 1 subfamily.

It localises to the cytoplasm. The catalysed reaction is CMP + ATP = CDP + ADP. It carries out the reaction dCMP + ATP = dCDP + ADP. This Deinococcus radiodurans (strain ATCC 13939 / DSM 20539 / JCM 16871 / CCUG 27074 / LMG 4051 / NBRC 15346 / NCIMB 9279 / VKM B-1422 / R1) protein is Cytidylate kinase.